A 223-amino-acid polypeptide reads, in one-letter code: Deoxyribose-phosphate aldolase (223 aa).

Aspartate 89 acts as the Proton donor/acceptor in catalysis. Lysine 154 functions as the Schiff-base intermediate with acetaldehyde in the catalytic mechanism. Catalysis depends on lysine 183, which acts as the Proton donor/acceptor.

This sequence belongs to the DeoC/FbaB aldolase family. DeoC type 1 subfamily.

It is found in the cytoplasm. It carries out the reaction 2-deoxy-D-ribose 5-phosphate = D-glyceraldehyde 3-phosphate + acetaldehyde. It participates in carbohydrate degradation; 2-deoxy-D-ribose 1-phosphate degradation; D-glyceraldehyde 3-phosphate and acetaldehyde from 2-deoxy-alpha-D-ribose 1-phosphate: step 2/2. In terms of biological role, catalyzes a reversible aldol reaction between acetaldehyde and D-glyceraldehyde 3-phosphate to generate 2-deoxy-D-ribose 5-phosphate. The polypeptide is Deoxyribose-phosphate aldolase (Thermoanaerobacter pseudethanolicus (strain ATCC 33223 / 39E) (Clostridium thermohydrosulfuricum)).